The sequence spans 366 residues: Ribosomal RNA large subunit methyltransferase M (366 aa).

S-adenosyl-L-methionine contacts are provided by residues Ser-188, 221–224 (CPGG), Asp-240, Asp-260, and Asp-277. Catalysis depends on Lys-306, which acts as the Proton acceptor.

The protein belongs to the class I-like SAM-binding methyltransferase superfamily. RNA methyltransferase RlmE family. RlmM subfamily. In terms of assembly, monomer.

The protein resides in the cytoplasm. It catalyses the reaction cytidine(2498) in 23S rRNA + S-adenosyl-L-methionine = 2'-O-methylcytidine(2498) in 23S rRNA + S-adenosyl-L-homocysteine + H(+). In terms of biological role, catalyzes the 2'-O-methylation at nucleotide C2498 in 23S rRNA. The chain is Ribosomal RNA large subunit methyltransferase M from Salmonella dublin (strain CT_02021853).